The primary structure comprises 420 residues: Pyridinium-3,5-bisthiocarboxylic acid mononucleotide nickel insertion protein (420 aa).

The segment at 81–104 is disordered; it reads NHEHKHNHHEIKNDEPAHSHEHHH. Residues 90–99 are compositionally biased toward basic and acidic residues; it reads EIKNDEPAHS.

The protein belongs to the LarC family.

It carries out the reaction Ni(II)-pyridinium-3,5-bisthiocarboxylate mononucleotide = pyridinium-3,5-bisthiocarboxylate mononucleotide + Ni(2+). Its function is as follows. Involved in the biosynthesis of a nickel-pincer cofactor ((SCS)Ni(II) pincer complex). Binds Ni(2+), and functions in nickel delivery to pyridinium-3,5-bisthiocarboxylic acid mononucleotide (P2TMN), to form the mature cofactor. Is thus probably required for the activation of nickel-pincer cofactor-dependent enzymes. This is Pyridinium-3,5-bisthiocarboxylic acid mononucleotide nickel insertion protein from Clostridium acetobutylicum (strain ATCC 824 / DSM 792 / JCM 1419 / IAM 19013 / LMG 5710 / NBRC 13948 / NRRL B-527 / VKM B-1787 / 2291 / W).